A 197-amino-acid polypeptide reads, in one-letter code: Phosphoheptose isomerase (197 aa).

Residues 36–197 (MVNALLNEGK…IDSQLFGSEE (162 aa)) form the SIS domain. 51-53 (NGG) provides a ligand contact to substrate. Zn(2+)-binding residues include His60 and Glu64. Substrate-binding positions include Glu64, 93-94 (ND), 119-121 (STS), Ser124, and Gln174. Zn(2+)-binding residues include Gln174 and His182.

It belongs to the SIS family. GmhA subfamily. In terms of assembly, homotetramer. The cofactor is Zn(2+).

It is found in the cytoplasm. It catalyses the reaction 2 D-sedoheptulose 7-phosphate = D-glycero-alpha-D-manno-heptose 7-phosphate + D-glycero-beta-D-manno-heptose 7-phosphate. It participates in carbohydrate biosynthesis; D-glycero-D-manno-heptose 7-phosphate biosynthesis; D-glycero-alpha-D-manno-heptose 7-phosphate and D-glycero-beta-D-manno-heptose 7-phosphate from sedoheptulose 7-phosphate: step 1/1. Catalyzes the isomerization of sedoheptulose 7-phosphate in D-glycero-D-manno-heptose 7-phosphate. The sequence is that of Phosphoheptose isomerase from Pseudomonas putida (strain W619).